The sequence spans 371 residues: Glutamate 5-kinase 2 (371 aa).

An ATP-binding site is contributed by K13. Residues S53, D140, and N152 each coordinate substrate. ATP-binding positions include S172–D173 and T214–K220. A PUA domain is found at E280–D356.

The protein belongs to the glutamate 5-kinase family.

The protein localises to the cytoplasm. The catalysed reaction is L-glutamate + ATP = L-glutamyl 5-phosphate + ADP. It participates in amino-acid biosynthesis; L-proline biosynthesis; L-glutamate 5-semialdehyde from L-glutamate: step 1/2. Functionally, catalyzes the transfer of a phosphate group to glutamate to form L-glutamate 5-phosphate. The protein is Glutamate 5-kinase 2 (proJ) of Bacillus subtilis (strain 168).